The primary structure comprises 195 residues: Endoribonuclease YbeY (195 aa).

Zn(2+) is bound by residues His152, His156, and His162.

Belongs to the endoribonuclease YbeY family. Zn(2+) is required as a cofactor.

Its subcellular location is the cytoplasm. Its function is as follows. Single strand-specific metallo-endoribonuclease involved in late-stage 70S ribosome quality control and in maturation of the 3' terminus of the 16S rRNA. The protein is Endoribonuclease YbeY of Rhodopseudomonas palustris (strain HaA2).